Reading from the N-terminus, the 219-residue chain is Inner membrane protein YccA (219 aa).

Residues 1–22 are Periplasmic-facing; it reads MDRIVSSSHDRTSLLSTHKVLR. The next 2 helical transmembrane spans lie at 23–43 and 44–64; these read NTYF…TAST and VLML…GLMF. The Periplasmic portion of the chain corresponds to 65-73; the sequence is LTYKTANKP. A helical membrane pass occupies residues 74–94; the sequence is TGIISAFAFTGFLGYILGPIL. The Cytoplasmic segment spans residues 95–104; sequence NTYLSAGMGD. Residues 105–125 traverse the membrane as a helical segment; the sequence is VIAMALGGTALVFFCCSAYVL. Over 126–133 the chain is Periplasmic; it reads TTRKDMSF. A helical membrane pass occupies residues 134 to 154; that stretch reads LGGMLMAGIVVVLIGMVANIF. Residues 155 to 157 lie on the Cytoplasmic side of the membrane; sequence LQL. A helical membrane pass occupies residues 158-178; it reads PALHLAISAVFILISSGAILF. Topologically, residues 179–195 are periplasmic; that stretch reads ETSNIIHGGETNYIRAT. The helical transmembrane segment at 196-216 threads the bilayer; sequence VSLYVSLYNIFVSLLSILGFA. Topologically, residues 217-219 are cytoplasmic; sequence SRD.

This sequence belongs to the BI1 family.

It localises to the cell inner membrane. The protein is Inner membrane protein YccA (yccA) of Escherichia coli O6:H1 (strain CFT073 / ATCC 700928 / UPEC).